Consider the following 145-residue polypeptide: Transcription factor MEE8 (145 aa).

Residues 33–49 (EKGVEKVGQKRSAESRR) are compositionally biased toward basic and acidic residues. Residues 33-61 (EKGVEKVGQKRSAESRREGKKKRVKTQCV) are disordered. The bHLH domain maps to 66–115 (DKSDHDTLLKKKRRERIRRQLETLKEITPNCPQSDINAILDCVIEYTNNL).

Homodimer.

The protein localises to the nucleus. Its function is as follows. Required during early embryo development, for the endosperm formation. The protein is Transcription factor MEE8 (MEE8) of Arabidopsis thaliana (Mouse-ear cress).